The chain runs to 271 residues: Putative phosphoenolpyruvate synthase regulatory protein (271 aa).

An ADP-binding site is contributed by 151-158 (GVSRSGKT).

Belongs to the pyruvate, phosphate/water dikinase regulatory protein family. PSRP subfamily.

It catalyses the reaction [pyruvate, water dikinase] + ADP = [pyruvate, water dikinase]-phosphate + AMP + H(+). It carries out the reaction [pyruvate, water dikinase]-phosphate + phosphate + H(+) = [pyruvate, water dikinase] + diphosphate. Its function is as follows. Bifunctional serine/threonine kinase and phosphorylase involved in the regulation of the phosphoenolpyruvate synthase (PEPS) by catalyzing its phosphorylation/dephosphorylation. The chain is Putative phosphoenolpyruvate synthase regulatory protein from Paraburkholderia xenovorans (strain LB400).